A 307-amino-acid chain; its full sequence is Thiohydrolase apmlB (307 aa).

Belongs to the polyketide transferase af380 family.

In terms of biological role, thiohydrolase; part of the gene cluster that mediates the biosynthesis of phaeospelide A, a fungal polyene macrolide with a 34-membered macrolactone ring and an all-trans conjugated hexaene structure. The HR-PKS ApmlA uses acetyl-CoA and malonyl-CoA as its starter and extender units, respectively, and provides the large carbon framework in phaeospelide via 16 cycles of polyketide chain elongation, which is the largest number identified in fungal iterative PKSs thus far. During round 1, the KR domain reduces beta -ketone to an L-oriented hydroxy group, while during later rounds, it provides hydroxy groups in the D-configuration. The characteristic conjugated hexaene moiety is built during the later rounds (10-15), when the KR and DH domains are at work but ER is off. Phylogenetic analysis of the DH domain suggests that a polyene formation is programmed in the DH domain. Finally, the mature ACP-tethered carbon chain is transferred to the serine residue of the thiohydrolase apmlB, followed by intramolecular macrolactonization, generating phaeospelide A. When one elongation cycle during rounds 7-9 is skipped, phaeospelide B is biosynthesized instead. The polypeptide is Thiohydrolase apmlB (Arthrinium phaeospermum (Gymnosporium phaeospermum)).